The chain runs to 352 residues: Molybdenum import ATP-binding protein ModC (352 aa).

The ABC transporter domain occupies 1–229; that stretch reads MLELNFSQTL…SVMHPWLPKE (229 aa). 31 to 38 contributes to the ATP binding site; it reads GVSGAGKT. In terms of domain architecture, Mop spans 289-352; it reads QTSIRNVLRA…AQVKSVSITA (64 aa).

The protein belongs to the ABC transporter superfamily. Molybdate importer (TC 3.A.1.8) family. As to quaternary structure, the complex is composed of two ATP-binding proteins (ModC), two transmembrane proteins (ModB) and a solute-binding protein (ModA).

It is found in the cell inner membrane. The catalysed reaction is molybdate(out) + ATP + H2O = molybdate(in) + ADP + phosphate + H(+). Functionally, part of the ABC transporter complex ModABC involved in molybdenum import. Responsible for energy coupling to the transport system. This is Molybdenum import ATP-binding protein ModC from Salmonella typhi.